The following is a 185-amino-acid chain: HTH-type transcriptional regulator SA2364 (185 aa).

Positions 6–66 (KENRQRIEEI…YVIQRDLDIF (61 aa)) constitute an HTH tetR-type domain. Residues 29 to 48 (SMNRIAKELGIGMGTLYRHF) constitute a DNA-binding region (H-T-H motif).

This is HTH-type transcriptional regulator SA2364 from Staphylococcus aureus (strain N315).